A 231-amino-acid polypeptide reads, in one-letter code: Somatolactin-2 (231 aa).

Positions 1 to 24 (MRMMRAIKQGQWAILLWPYLLTTS) are cleaved as a signal peptide. Cystine bridges form between C29-C39, C89-C205, and C222-C230. The N-linked (GlcNAc...) asparagine glycan is linked to N145.

It belongs to the somatotropin/prolactin family. As to expression, pituitary gland.

Its subcellular location is the secreted. The protein is Somatolactin-2 of Sparus aurata (Gilthead sea bream).